Here is a 230-residue protein sequence, read N- to C-terminus: RNA chaperone ProQ (230 aa).

A disordered region spans residues 106-181 (AKARVQAQRA…EERHTPVSDI (76 aa)). The segment covering 146 to 155 (RRKDNAERKP) has biased composition (basic and acidic residues). The segment covering 158–167 (AKPAAAAKPS) has biased composition (low complexity).

Belongs to the ProQ family.

It localises to the cytoplasm. RNA chaperone with significant RNA binding, RNA strand exchange and RNA duplexing activities. May regulate ProP activity through an RNA-based, post-transcriptional mechanism. The protein is RNA chaperone ProQ of Cronobacter sakazakii (strain ATCC BAA-894) (Enterobacter sakazakii).